A 394-amino-acid polypeptide reads, in one-letter code: Phosphoglycerate kinase (394 aa).

Residues 21–23 (DLN), Arg36, 59–62 (HLGR), Arg113, and Arg146 each bind substrate. ATP is bound by residues Lys197, Glu319, and 345-348 (GGDT).

Belongs to the phosphoglycerate kinase family. As to quaternary structure, monomer.

It localises to the cytoplasm. The catalysed reaction is (2R)-3-phosphoglycerate + ATP = (2R)-3-phospho-glyceroyl phosphate + ADP. Its pathway is carbohydrate degradation; glycolysis; pyruvate from D-glyceraldehyde 3-phosphate: step 2/5. The polypeptide is Phosphoglycerate kinase (Halorhodospira halophila (strain DSM 244 / SL1) (Ectothiorhodospira halophila (strain DSM 244 / SL1))).